The chain runs to 386 residues: Methionine aminotransferase (386 aa).

Position 236 is an N6-(pyridoxal phosphate)lysine (Lys236).

This sequence belongs to the class-I pyridoxal-phosphate-dependent aminotransferase family. In terms of assembly, homodimer. The cofactor is pyridoxal 5'-phosphate.

It is found in the cytoplasm. It catalyses the reaction a 2-oxocarboxylate + L-methionine = 4-methylsulfanyl-2-oxobutanoate + an L-alpha-amino acid. Shows aminotransferase activity with methionine and histidine as substrates, and to a lesser extent also with phenylalanine. This Escherichia coli (strain K12) protein is Methionine aminotransferase (ybdL).